The sequence spans 123 residues: Small ribosomal subunit protein uS12 (123 aa).

Positions methionine 1–arginine 31 are disordered. Basic residues predominate over residues arginine 9 to lysine 18. Aspartate 89 carries the post-translational modification 3-methylthioaspartic acid.

Belongs to the universal ribosomal protein uS12 family. As to quaternary structure, part of the 30S ribosomal subunit. Contacts proteins S8 and S17. May interact with IF1 in the 30S initiation complex.

Its function is as follows. With S4 and S5 plays an important role in translational accuracy. Interacts with and stabilizes bases of the 16S rRNA that are involved in tRNA selection in the A site and with the mRNA backbone. Located at the interface of the 30S and 50S subunits, it traverses the body of the 30S subunit contacting proteins on the other side and probably holding the rRNA structure together. The combined cluster of proteins S8, S12 and S17 appears to hold together the shoulder and platform of the 30S subunit. The chain is Small ribosomal subunit protein uS12 from Corynebacterium aurimucosum (strain ATCC 700975 / DSM 44827 / CIP 107346 / CN-1) (Corynebacterium nigricans).